The sequence spans 273 residues: 2-dehydro-3-deoxyphosphooctonate aldolase (273 aa).

Belongs to the KdsA family.

It is found in the cytoplasm. It carries out the reaction D-arabinose 5-phosphate + phosphoenolpyruvate + H2O = 3-deoxy-alpha-D-manno-2-octulosonate-8-phosphate + phosphate. It functions in the pathway carbohydrate biosynthesis; 3-deoxy-D-manno-octulosonate biosynthesis; 3-deoxy-D-manno-octulosonate from D-ribulose 5-phosphate: step 2/3. The protein operates within bacterial outer membrane biogenesis; lipopolysaccharide biosynthesis. This is 2-dehydro-3-deoxyphosphooctonate aldolase from Cyanothece sp. (strain PCC 7425 / ATCC 29141).